The sequence spans 200 residues: MTKLLVLYYSMYGHVETMAHAVAEGARSVEEVEVTLKRVPELMPEEIARNAGAKLAQEAPIATVDELPEYDAIIFGTPTRFGNMCAQMRNFLDQTGKHWMSGALIGKVGSVFTSTASQHGGQETTITSFHSTLLHQGMVIVGVPYSCQALLNMNEITGGSPYGASTLADADGSRQPSENELTIARFQGEHVAKFTKKVVE.

In terms of domain architecture, Flavodoxin-like spans 4 to 191 (LLVLYYSMYG…TIARFQGEHV (188 aa)). Residues 10 to 15 (SMYGHV) and 79 to 81 (TRF) each bind FMN. Position 12 (Tyr-12) interacts with NAD(+). Trp-99 contributes to the substrate binding site. Residues 114–120 (STASQHG) and His-135 contribute to the FMN site.

The protein belongs to the WrbA family. The cofactor is FMN.

It catalyses the reaction a quinone + NADH + H(+) = a quinol + NAD(+). The enzyme catalyses a quinone + NADPH + H(+) = a quinol + NADP(+). The chain is NAD(P)H dehydrogenase (quinone) from Nitrosococcus oceani (strain ATCC 19707 / BCRC 17464 / JCM 30415 / NCIMB 11848 / C-107).